We begin with the raw amino-acid sequence, 432 residues long: Trigger factor (432 aa).

Residues 161–246 (EDRVTIDFTG…LKKVEERELP (86 aa)) form the PPIase FKBP-type domain.

This sequence belongs to the FKBP-type PPIase family. Tig subfamily.

The protein localises to the cytoplasm. The catalysed reaction is [protein]-peptidylproline (omega=180) = [protein]-peptidylproline (omega=0). Its function is as follows. Involved in protein export. Acts as a chaperone by maintaining the newly synthesized protein in an open conformation. Functions as a peptidyl-prolyl cis-trans isomerase. The sequence is that of Trigger factor from Salmonella typhi.